A 169-amino-acid polypeptide reads, in one-letter code: UPF0725 protein At2g19200 (169 aa).

The protein belongs to the UPF0725 (EMB2204) family.

The chain is UPF0725 protein At2g19200 from Arabidopsis thaliana (Mouse-ear cress).